Here is a 189-residue protein sequence, read N- to C-terminus: Elongation factor P (189 aa).

It belongs to the elongation factor P family.

It localises to the cytoplasm. It functions in the pathway protein biosynthesis; polypeptide chain elongation. In terms of biological role, involved in peptide bond synthesis. Stimulates efficient translation and peptide-bond synthesis on native or reconstituted 70S ribosomes in vitro. Probably functions indirectly by altering the affinity of the ribosome for aminoacyl-tRNA, thus increasing their reactivity as acceptors for peptidyl transferase. The protein is Elongation factor P of Ehrlichia chaffeensis (strain ATCC CRL-10679 / Arkansas).